A 92-amino-acid chain; its full sequence is MGRSLKKGPFVDDHLMKKVEAQQGAEKKKVIKTWSRRSTIFPSFVGFTIAVYDGRKHVPVYIQEDMVGHKLGEFAPTRTYRGHVADDKKTKR.

This sequence belongs to the universal ribosomal protein uS19 family.

Protein S19 forms a complex with S13 that binds strongly to the 16S ribosomal RNA. This Enterococcus faecalis (strain ATCC 700802 / V583) protein is Small ribosomal subunit protein uS19.